Consider the following 364-residue polypeptide: Phosphoserine aminotransferase (364 aa).

L-glutamate is bound at residue Arg46. Pyridoxal 5'-phosphate contacts are provided by residues 80-81, Trp106, Thr157, Asp176, and Gln199; that span reads AR. An N6-(pyridoxal phosphate)lysine modification is found at Lys200. Position 241-242 (241-242) interacts with pyridoxal 5'-phosphate; that stretch reads NT.

It belongs to the class-V pyridoxal-phosphate-dependent aminotransferase family. SerC subfamily. In terms of assembly, homodimer. Pyridoxal 5'-phosphate is required as a cofactor.

The protein localises to the cytoplasm. It catalyses the reaction O-phospho-L-serine + 2-oxoglutarate = 3-phosphooxypyruvate + L-glutamate. The catalysed reaction is 4-(phosphooxy)-L-threonine + 2-oxoglutarate = (R)-3-hydroxy-2-oxo-4-phosphooxybutanoate + L-glutamate. It participates in amino-acid biosynthesis; L-serine biosynthesis; L-serine from 3-phospho-D-glycerate: step 2/3. It functions in the pathway cofactor biosynthesis; pyridoxine 5'-phosphate biosynthesis; pyridoxine 5'-phosphate from D-erythrose 4-phosphate: step 3/5. In terms of biological role, catalyzes the reversible conversion of 3-phosphohydroxypyruvate to phosphoserine and of 3-hydroxy-2-oxo-4-phosphonooxybutanoate to phosphohydroxythreonine. The chain is Phosphoserine aminotransferase from Vibrio parahaemolyticus serotype O3:K6 (strain RIMD 2210633).